The primary structure comprises 291 residues: ATP synthase gamma chain (291 aa).

The protein belongs to the ATPase gamma chain family. F-type ATPases have 2 components, CF(1) - the catalytic core - and CF(0) - the membrane proton channel. CF(1) has five subunits: alpha(3), beta(3), gamma(1), delta(1), epsilon(1). CF(0) has three main subunits: a, b and c.

It localises to the cell membrane. Its function is as follows. Produces ATP from ADP in the presence of a proton gradient across the membrane. The gamma chain is believed to be important in regulating ATPase activity and the flow of protons through the CF(0) complex. The chain is ATP synthase gamma chain from Lachnoclostridium phytofermentans (strain ATCC 700394 / DSM 18823 / ISDg) (Clostridium phytofermentans).